Consider the following 265-residue polypeptide: Flavin-dependent thymidylate synthase (265 aa).

The ThyX domain maps to 11–224; sequence GFLKLIDFMG…PIAFNSFENH (214 aa). FAD-binding positions include S56, 79-81, and E87; that span reads RHR. 76 to 79 provides a ligand contact to dUMP; the sequence is QWMR. The ThyX motif signature appears at 79–89; sequence RHRTARINEVS. R155 contacts dUMP. FAD is bound by residues 171 to 173 and H177; that span reads DLN. R182 provides a ligand contact to dUMP. R182 serves as the catalytic Involved in ionization of N3 of dUMP, leading to its activation.

This sequence belongs to the thymidylate synthase ThyX family. In terms of assembly, homotetramer. FAD is required as a cofactor.

The catalysed reaction is dUMP + (6R)-5,10-methylene-5,6,7,8-tetrahydrofolate + NADPH + H(+) = dTMP + (6S)-5,6,7,8-tetrahydrofolate + NADP(+). The protein operates within pyrimidine metabolism; dTTP biosynthesis. In terms of biological role, catalyzes the reductive methylation of 2'-deoxyuridine-5'-monophosphate (dUMP) to 2'-deoxythymidine-5'-monophosphate (dTMP) while utilizing 5,10-methylenetetrahydrofolate (mTHF) as the methyl donor, and NADPH and FADH(2) as the reductant. The polypeptide is Flavin-dependent thymidylate synthase (Borreliella burgdorferi (strain ATCC 35210 / DSM 4680 / CIP 102532 / B31) (Borrelia burgdorferi)).